The primary structure comprises 492 residues: N-succinylglutamate 5-semialdehyde dehydrogenase (492 aa).

NAD(+) is bound at residue 220–225 (GSASTG). Catalysis depends on residues glutamate 243 and cysteine 277.

This sequence belongs to the aldehyde dehydrogenase family. AstD subfamily.

It carries out the reaction N-succinyl-L-glutamate 5-semialdehyde + NAD(+) + H2O = N-succinyl-L-glutamate + NADH + 2 H(+). The protein operates within amino-acid degradation; L-arginine degradation via AST pathway; L-glutamate and succinate from L-arginine: step 4/5. Functionally, catalyzes the NAD-dependent reduction of succinylglutamate semialdehyde into succinylglutamate. In Salmonella paratyphi C (strain RKS4594), this protein is N-succinylglutamate 5-semialdehyde dehydrogenase.